The sequence spans 359 residues: 4-hydroxy-3-methylbut-2-en-1-yl diphosphate synthase (flavodoxin) (359 aa).

Residues Cys-264, Cys-267, Cys-299, and Glu-306 each coordinate [4Fe-4S] cluster.

It belongs to the IspG family. [4Fe-4S] cluster serves as cofactor.

It carries out the reaction (2E)-4-hydroxy-3-methylbut-2-enyl diphosphate + oxidized [flavodoxin] + H2O + 2 H(+) = 2-C-methyl-D-erythritol 2,4-cyclic diphosphate + reduced [flavodoxin]. It participates in isoprenoid biosynthesis; isopentenyl diphosphate biosynthesis via DXP pathway; isopentenyl diphosphate from 1-deoxy-D-xylulose 5-phosphate: step 5/6. In terms of biological role, converts 2C-methyl-D-erythritol 2,4-cyclodiphosphate (ME-2,4cPP) into 1-hydroxy-2-methyl-2-(E)-butenyl 4-diphosphate. The polypeptide is 4-hydroxy-3-methylbut-2-en-1-yl diphosphate synthase (flavodoxin) (Helicobacter pylori (strain G27)).